A 648-amino-acid chain; its full sequence is Copper methylamine oxidase (648 aa).

Positions 1-9 are excised as a propeptide; it reads MTLNAESEA. 299–310 lines the substrate pocket; it reads AFDSGEYNIGNM. D301 serves as the catalytic Proton acceptor. A disulfide bond links C320 and C346. 382 to 387 contributes to the substrate binding site; that stretch reads VANYEY. Catalysis depends on Y385, which acts as the Schiff-base intermediate with substrate; via topaquinone. 2',4',5'-topaquinone is present on Y385. Residues H436 and H438 each contribute to the Cu cation site. Mn(2+)-binding residues include D445, F446, and D584. H595 serves as a coordination point for Cu cation. Residues 629 to 648 are disordered; it reads PTSTSTTQTGEADTCCHTDK.

This sequence belongs to the copper/topaquinone oxidase family. In terms of assembly, homodimer. Cu cation is required as a cofactor. Requires Zn(2+) as cofactor. The cofactor is L-topaquinone. Mn(2+) serves as cofactor. Post-translationally, topaquinone (TPQ) is generated by copper-dependent autoxidation of a specific tyrosyl residue.

It carries out the reaction a primary methyl amine + O2 + H2O = an aldehyde + H2O2 + NH4(+). In Arthrobacter sp. (strain P1), this protein is Copper methylamine oxidase (maoII).